A 186-amino-acid polypeptide reads, in one-letter code: Elongation factor P (186 aa).

The protein belongs to the elongation factor P family.

The protein localises to the cytoplasm. Its pathway is protein biosynthesis; polypeptide chain elongation. Its function is as follows. Involved in peptide bond synthesis. Stimulates efficient translation and peptide-bond synthesis on native or reconstituted 70S ribosomes in vitro. Probably functions indirectly by altering the affinity of the ribosome for aminoacyl-tRNA, thus increasing their reactivity as acceptors for peptidyl transferase. This Streptococcus agalactiae serotype Ia (strain ATCC 27591 / A909 / CDC SS700) protein is Elongation factor P.